The chain runs to 153 residues: MGKISSLPTQLFKCCFCDFLKVKMHTVSSSHLFYLALCLLTFPSPATAGPETLCGAELVDALQFVCGDRGFYFNKPTGYGSSSRRAPQTGIVDECCFRSCDLRRLEMYCAPLKPAKSARSVRAQRHTDMPKAQKEVHLKNASRGSAGNKNYRM.

The tract at residues 49-77 (GPETLCGAELVDALQFVCGDRGFYFNKPT) is b. Disulfide bonds link Cys-54–Cys-96, Cys-66–Cys-109, and Cys-95–Cys-100. Residues 78 to 89 (GYGSSSRRAPQT) form a c region. Positions 90–110 (GIVDECCFRSCDLRRLEMYCA) are a. The tract at residues 111–118 (PLKPAKSA) is d. The propeptide at 119–153 (RSVRAQRHTDMPKAQKEVHLKNASRGSAGNKNYRM) is e peptide. The segment at 120–153 (SVRAQRHTDMPKAQKEVHLKNASRGSAGNKNYRM) is disordered. The span at 125-138 (RHTDMPKAQKEVHL) shows a compositional bias: basic and acidic residues. A compositionally biased stretch (polar residues) spans 142 to 153 (SRGSAGNKNYRM).

The protein belongs to the insulin family. Forms a ternary complex with IGFR1 and ITGAV:ITGB3. Forms a ternary complex with IGFR1 and ITGA6:ITGB4. Forms a ternary complex with IGFBP3 and ALS.

It is found in the secreted. The insulin-like growth factors, isolated from plasma, are structurally and functionally related to insulin but have a much higher growth-promoting activity. May be a physiological regulator of [1-14C]-2-deoxy-D-glucose (2DG) transport and glycogen synthesis in osteoblasts. Stimulates glucose transport in bone-derived osteoblastic (PyMS) cells and is effective at much lower concentrations than insulin, not only regarding glycogen and DNA synthesis but also with regard to enhancing glucose uptake. May play a role in synapse maturation. Ca(2+)-dependent exocytosis of IGF1 is required for sensory perception of smell in the olfactory bulb. Acts as a ligand for IGF1R. Binds to the alpha subunit of IGF1R, leading to the activation of the intrinsic tyrosine kinase activity which autophosphorylates tyrosine residues in the beta subunit thus initiating a cascade of down-stream signaling events leading to activation of the PI3K-AKT/PKB and the Ras-MAPK pathways. Binds to integrins ITGAV:ITGB3 and ITGA6:ITGB4. Its binding to integrins and subsequent ternary complex formation with integrins and IGFR1 are essential for IGF1 signaling. Induces the phosphorylation and activation of IGFR1, MAPK3/ERK1, MAPK1/ERK2 and AKT1. As part of the MAPK/ERK signaling pathway, acts as a negative regulator of apoptosis in cardiomyocytes via promotion of STUB1/CHIP-mediated ubiquitination and degradation of ICER-type isoforms of CREM. This is Insulin-like growth factor 1 from Canis lupus familiaris (Dog).